The sequence spans 683 residues: Protein kinase C eta type (683 aa).

The 118-residue stretch at 1 to 118 (MSSGTMKFNG…LRTAGTSDTF (118 aa)) folds into the C2 domain. Residues Ser28 and Ser32 each carry the phosphoserine modification. 2 consecutive Phorbol-ester/DAG-type zinc fingers follow at residues 171–222 (GHKF…VTAC) and 245–295 (PHKF…APNC). Ser317 carries the post-translational modification Phosphoserine. The Protein kinase domain occupies 355-614 (FEFIRVLGKG…EHEILRHPFF (260 aa)). ATP contacts are provided by residues 361 to 369 (LGKGSFGKV) and Lys384. Asp479 functions as the Proton acceptor in the catalytic mechanism. Thr513 carries the phosphothreonine; by PDPK1 modification. In terms of domain architecture, AGC-kinase C-terminal spans 615–683 (KEIDWAQLNH…FSYVSPELQL (69 aa)). Phosphothreonine is present on Thr656. A Phosphoserine modification is found at Ser675.

This sequence belongs to the protein kinase superfamily. AGC Ser/Thr protein kinase family. PKC subfamily. As to quaternary structure, interacts with FYN. Interacts with RALA. Interacts with DGKQ. Predominantly expressed in lung and skin.

Its subcellular location is the cytoplasm. It carries out the reaction L-seryl-[protein] + ATP = O-phospho-L-seryl-[protein] + ADP + H(+). It catalyses the reaction L-threonyl-[protein] + ATP = O-phospho-L-threonyl-[protein] + ADP + H(+). Its activity is regulated as follows. Novel PKCs (PRKCD, PRKCE, PRKCH and PRKCQ) are calcium-insensitive, but activated by diacylglycerol (DAG) and phosphatidylserine. Three specific sites; Thr-513 (activation loop of the kinase domain), Thr-656 (turn motif) and Ser-675 (hydrophobic region), need to be phosphorylated for its full activation. In terms of biological role, calcium-independent, phospholipid- and diacylglycerol (DAG)-dependent serine/threonine-protein kinase that is involved in the regulation of cell differentiation in keratinocytes and pre-B cell receptor, mediates regulation of epithelial tight junction integrity and foam cell formation, and is required for glioblastoma proliferation and apoptosis prevention in MCF-7 cells. In keratinocytes, binds and activates the tyrosine kinase FYN, which in turn blocks epidermal growth factor receptor (EGFR) signaling and leads to keratinocyte growth arrest and differentiation. Associates with the cyclin CCNE1-CDK2-CDKN1B complex and inhibits CDK2 kinase activity, leading to RB1 dephosphorylation and thereby G1 arrest in keratinocytes. In association with RALA activates actin depolymerization, which is necessary for keratinocyte differentiation. In the pre-B cell receptor signaling, functions downstream of BLNK by up-regulating IRF4, which in turn activates L chain gene rearrangement. Regulates epithelial tight junctions (TJs) by phosphorylating occludin (OCLN) on threonine residues, which is necessary for the assembly and maintenance of TJs. In association with PLD2 and via TLR4 signaling, is involved in lipopolysaccharide (LPS)-induced RGS2 down-regulation and foam cell formation. Upon PMA stimulation, mediates glioblastoma cell proliferation by activating the mTOR pathway, the PI3K/AKT pathway and the ERK1-dependent phosphorylation of ELK1. Involved in the protection of glioblastoma cells from irradiation-induced apoptosis by preventing caspase-9 activation. In camptothecin-treated MCF-7 cells, regulates NF-kappa-B upstream signaling by activating IKBKB, and confers protection against DNA damage-induced apoptosis. Promotes oncogenic functions of ATF2 in the nucleus while blocking its apoptotic function at mitochondria. Phosphorylates ATF2 which promotes its nuclear retention and transcriptional activity and negatively regulates its mitochondrial localization. This is Protein kinase C eta type (Prkch) from Mus musculus (Mouse).